Consider the following 338-residue polypeptide: Calcium uniporter protein 4, mitochondrial (338 aa).

The transit peptide at 1-36 directs the protein to the mitochondrion; the sequence is MVMMKKLLSNRLFNMSKTASQSLMNCRTSSSSSLAM. A helical membrane pass occupies residues 233-253; it reads LWAGLGYLIIQTAGFMRLTFW. A Selectivity filter motif is present at residues 257–265; sequence WDVMEPICF. E261 is a binding site for Ca(2+). Residues 263–280 form a helical membrane-spanning segment; the sequence is ICFYVSSVYFMAGYTFFL.

It belongs to the MCU (TC 1.A.77) family.

The protein resides in the mitochondrion inner membrane. It carries out the reaction Ca(2+)(in) = Ca(2+)(out). Its function is as follows. Mitochondrial inner membrane calcium uniporter that mediates calcium uptake into mitochondria. Constitutes a pore-forming and calcium-conducting subunit. Mitochondrial calcium homeostasis plays key roles in cellular physiology and regulates cell bioenergetics, cytoplasmic calcium signals and activation of cell death pathways. The protein is Calcium uniporter protein 4, mitochondrial of Arabidopsis thaliana (Mouse-ear cress).